We begin with the raw amino-acid sequence, 209 residues long: MGKKKRSASSSRWLNEHFSDQFVQKAHKQKLRSRAYFKIDEIQQTDKLFKQGMTVVDLGAAPGGWSQYVVSQIGGKGRVIACDILEMDPIVGVDFLQGDFRDENVLNALLARVGEDKVDVVMSDMAPNFSGMPSVDIPRAMYLVELALDMCKQVLASKGSFVVKVFQGEGFDEYLREIRSLFDVVKVRKPEASRGRSREVYIVATGYKG.

S-adenosyl-L-methionine-binding residues include Gly-63, Trp-65, Asp-83, Asp-99, and Asp-124. Lys-164 acts as the Proton acceptor in catalysis. A TRAM domain is found at 191–209 (EASRGRSREVYIVATGYKG).

It belongs to the class I-like SAM-binding methyltransferase superfamily. RNA methyltransferase RlmE family.

It is found in the cytoplasm. It catalyses the reaction uridine(2552) in 23S rRNA + S-adenosyl-L-methionine = 2'-O-methyluridine(2552) in 23S rRNA + S-adenosyl-L-homocysteine + H(+). Specifically methylates the uridine in position 2552 of 23S rRNA at the 2'-O position of the ribose in the fully assembled 50S ribosomal subunit. The protein is Ribosomal RNA large subunit methyltransferase E of Haemophilus influenzae (strain ATCC 51907 / DSM 11121 / KW20 / Rd).